We begin with the raw amino-acid sequence, 404 residues long: Probable homogentisate phytyltransferase 1, chloroplastic (404 aa).

Residues 1-77 (MDSLRLRPSL…SHHRIPHRPT (77 aa)) constitute a chloroplast transit peptide. The interval 68-96 (SHHRIPHRPTSSSADASGQPLQSSAEAHD) is disordered. Residues 76–92 (PTSSSADASGQPLQSSA) show a composition bias toward polar residues. 9 helical membrane-spanning segments follow: residues 119–139 (TVIG…ENLS), 144–164 (LFLT…IYIV), 184–204 (LASG…FAAM), 216–238 (PLFL…LPFL), 245–265 (VVAA…AFFL), 282–302 (LIFA…FKDI), 325–345 (VFWI…LMGA), 348–368 (ACLW…AILW), and 382–402 (ITSF…LIPL).

Belongs to the UbiA prenyltransferase family.

Its subcellular location is the plastid. It localises to the chloroplast thylakoid membrane. It catalyses the reaction phytyl diphosphate + homogentisate + H(+) = 2-methyl-6-phytyl-1,4-benzene-1,4-diol + CO2 + diphosphate. The protein operates within cofactor biosynthesis; tocopherol biosynthesis. Functionally, involved in the synthesis of tocopherol (vitamin E). Catalyzes the condensation of homogentisate and phytyl diphosphate to form dimethylphytylhydroquinone. This Oryza sativa subsp. japonica (Rice) protein is Probable homogentisate phytyltransferase 1, chloroplastic (HPT1).